The sequence spans 66 residues: MAKSKDVRVTIILECTSCVRNGVNKESTGISRYITQKNRHNTPSRLELKKFCPYCYKHTIHGEIKK.

This sequence belongs to the bacterial ribosomal protein bL33 family.

Its subcellular location is the plastid. It localises to the chloroplast. This Gossypium barbadense (Sea Island cotton) protein is Large ribosomal subunit protein bL33c.